The following is a 667-amino-acid chain: MHKLTFAQLSFNSDNTPVSEQFDDIYFSTEDGVQESYYVFQDGNQLWQKWQNHHRSAFVIAETGFGTGLNFLAVAEKFQQFRSTFPDSPLKRLYFISFEKYPLTQQQLADIHQHYPQFTQLSATLIACWQPRQAGCQRYHFDDVYLDIWFGEMLENLPQLGDLYNATVDSWFLDGFSPDKNPTMWHEQLYQHMFRLTRVGGSFATFTAASHVRCGLQAVGFTVYKRKGFAKKREMLCGEKAQKSQTAEVNFPYFYSPPAIVNDDIAIVGGGIASLFVALSLLERGKQVTLYCQDSQVAQKASGNAQGAIYPQLSDDDPRNVRFYVHCFDYALQRLKQFEKLVPFEHALTGVVLSAYNEKTAQKLQKIARQTQNQDLFKWCQAEELTEYLGVAIANEGAFIPQAGWLSPVQFVQQAFAYLQTKGLKIVLNHTVTDPQFVEGKWQWQYQGVQFAHHILVLANGHSFTQFSQAEGIPLYPVRGQVSQIPTTPALQKLKCVICYDGYLTPMATNGYHCIGASHVRDNTDMAFSAIEHQQNLAKLQQNIGAYHWTQGIDLSANLAKQGIRSALRDRVPMVGPIPHFAVQKQQYSNIYNLLRRKKAVENAVNFPHLYMVNGLASRGLTTAPLLGEMLASLIVNEPIPISQDIWHALLPNRTWLRKWLKGSKVV.

The segment at 1 to 241 is tRNA (mnm(5)s(2)U34)-methyltransferase; the sequence is MHKLTFAQLS…KREMLCGEKA (241 aa). An FAD-dependent cmnm(5)s(2)U34 oxidoreductase region spans residues 268 to 667; it reads VGGGIASLFV…RKWLKGSKVV (400 aa).

The protein in the N-terminal section; belongs to the methyltransferase superfamily. tRNA (mnm(5)s(2)U34)-methyltransferase family. It in the C-terminal section; belongs to the DAO family. It depends on FAD as a cofactor.

It is found in the cytoplasm. It catalyses the reaction 5-aminomethyl-2-thiouridine(34) in tRNA + S-adenosyl-L-methionine = 5-methylaminomethyl-2-thiouridine(34) in tRNA + S-adenosyl-L-homocysteine + H(+). Functionally, catalyzes the last two steps in the biosynthesis of 5-methylaminomethyl-2-thiouridine (mnm(5)s(2)U) at the wobble position (U34) in tRNA. Catalyzes the FAD-dependent demodification of cmnm(5)s(2)U34 to nm(5)s(2)U34, followed by the transfer of a methyl group from S-adenosyl-L-methionine to nm(5)s(2)U34, to form mnm(5)s(2)U34. The sequence is that of tRNA 5-methylaminomethyl-2-thiouridine biosynthesis bifunctional protein MnmC from Haemophilus ducreyi (strain 35000HP / ATCC 700724).